Reading from the N-terminus, the 75-residue chain is DNA-directed RNA polymerase subunit omega (75 aa).

It belongs to the RNA polymerase subunit omega family. The RNAP catalytic core consists of 2 alpha, 1 beta, 1 beta' and 1 omega subunit. When a sigma factor is associated with the core the holoenzyme is formed, which can initiate transcription.

It catalyses the reaction RNA(n) + a ribonucleoside 5'-triphosphate = RNA(n+1) + diphosphate. In terms of biological role, promotes RNA polymerase assembly. Latches the N- and C-terminal regions of the beta' subunit thereby facilitating its interaction with the beta and alpha subunits. This chain is DNA-directed RNA polymerase subunit omega, found in Nitratidesulfovibrio vulgaris (strain DSM 19637 / Miyazaki F) (Desulfovibrio vulgaris).